A 196-amino-acid polypeptide reads, in one-letter code: Peptidyl-tRNA hydrolase (196 aa).

H15 serves as a coordination point for tRNA. The Proton acceptor role is filled by H20. Positions 66, 68, and 114 each coordinate tRNA.

It belongs to the PTH family. Monomer.

The protein localises to the cytoplasm. It catalyses the reaction an N-acyl-L-alpha-aminoacyl-tRNA + H2O = an N-acyl-L-amino acid + a tRNA + H(+). Its function is as follows. Hydrolyzes ribosome-free peptidyl-tRNAs (with 1 or more amino acids incorporated), which drop off the ribosome during protein synthesis, or as a result of ribosome stalling. In terms of biological role, catalyzes the release of premature peptidyl moieties from peptidyl-tRNA molecules trapped in stalled 50S ribosomal subunits, and thus maintains levels of free tRNAs and 50S ribosomes. This chain is Peptidyl-tRNA hydrolase, found in Polynucleobacter asymbioticus (strain DSM 18221 / CIP 109841 / QLW-P1DMWA-1) (Polynucleobacter necessarius subsp. asymbioticus).